Reading from the N-terminus, the 168-residue chain is MTTDTHTLHIEEILDLLPHRFPFLLVDRVLDFEEGKFLRAVKNVSFNEPFFQGHFPGKPIFPGVLILEAMAQATGILAFKSRGKLEPGELYYFAGIDEARFKRPVVPGDQMIMEVEFVKERRGLTRFTGVAKVDGEIVCTATMMCARSKPATAVVTKSEVTKPDVKES.

The active site involves His-54.

This sequence belongs to the thioester dehydratase family. FabZ subfamily.

The protein localises to the cytoplasm. It carries out the reaction a (3R)-hydroxyacyl-[ACP] = a (2E)-enoyl-[ACP] + H2O. In terms of biological role, involved in unsaturated fatty acids biosynthesis. Catalyzes the dehydration of short chain beta-hydroxyacyl-ACPs and long chain saturated and unsaturated beta-hydroxyacyl-ACPs. The protein is 3-hydroxyacyl-[acyl-carrier-protein] dehydratase FabZ of Yersinia enterocolitica serotype O:8 / biotype 1B (strain NCTC 13174 / 8081).